A 239-amino-acid polypeptide reads, in one-letter code: MSVAWLTQQLSTHGIELSDKQQQQFQTYYQMLVEWNEKMNLTSITEEHEVYLKHFYDSIATSFYTDLTKELTICDVGAGAGFPSIPLKIIFPNLKVTIVDSLNKRIHFLNQLAEALELDNVSFVHDRAETYGKGDYRASYDIVTARAVARLSVLSELCLPLVKKGGHFIALKSSKGEEELEEARFGIGVLGGKVLDTISYELPEDAGERQMIIIDKRSQTPKKYPRKPGTPNKSPLLEK.

Residues glycine 77, phenylalanine 82, 128-129, and arginine 146 each bind S-adenosyl-L-methionine; that span reads AE. The segment at 215-239 is disordered; sequence DKRSQTPKKYPRKPGTPNKSPLLEK.

It belongs to the methyltransferase superfamily. RNA methyltransferase RsmG family.

Its subcellular location is the cytoplasm. Specifically methylates the N7 position of guanine in position 535 of 16S rRNA. The protein is Ribosomal RNA small subunit methyltransferase G of Staphylococcus saprophyticus subsp. saprophyticus (strain ATCC 15305 / DSM 20229 / NCIMB 8711 / NCTC 7292 / S-41).